The sequence spans 339 residues: Cullin-associated NEDD8-dissociated protein 1, N-terminal part (339 aa).

2 HEAT repeats span residues 5-42 (HTIQ…NPCS) and 50-87 (ASAT…RLPL).

In terms of assembly, interacts with candA-C. Interacts with unneddylated cullins culA and culD; interaction occurs only when complexed with candA-C.

The protein localises to the nucleus. In terms of biological role, assembly factor of SCF (SKP1-CUL1-F-box protein) E3 ubiquitin ligase complexes that promotes the exchange of the substrate-recognition F-box subunit in SCF complexes, thereby playing a key role in the cellular repertoire of SCF complexes. Acts as a F-box protein exchange factor when interacting with candA-C. The polypeptide is Cullin-associated NEDD8-dissociated protein 1, N-terminal part (candA-N) (Emericella nidulans (strain FGSC A4 / ATCC 38163 / CBS 112.46 / NRRL 194 / M139) (Aspergillus nidulans)).